Consider the following 248-residue polypeptide: PACRG-like protein (248 aa).

At methionine 1 the chain carries N-acetylmethionine. The segment covering 1–29 (MQKSEGSGGTQLKNRATGNYDQRTSSSTQ) has biased composition (polar residues). Positions 1 to 71 (MQKSEGSGGT…LNPKTINPFG (71 aa)) are disordered. Over residues 39-49 (SKSSLSTSSPE) the composition is skewed to low complexity. Position 47 is a phosphoserine (serine 47).

The protein is PACRG-like protein (PACRGL) of Homo sapiens (Human).